The sequence spans 1589 residues: Sterile alpha motif domain-containing protein 9 (1589 aa).

The 65-residue stretch at 14–78 folds into the SAM domain; it reads WTKEDVNQWL…ELFKELRKTA (65 aa). The segment at 83 to 135 is disordered; sequence IQTSKMGKPSKNAPKDQTVSQKERRETSKQKQKGKENPDMANPSAMSTTAKGS. Positions 103-120 are enriched in basic and acidic residues; that stretch reads QKERRETSKQKQKGKENP.

Interacts with RGL2. Interacts with EEA1. As to quaternary structure, (Microbial infection) Interacts with myxoma virus protein M062. In terms of tissue distribution, widely expressed. Very low levels are detected in skeletal muscle. Not detected in brain. Down-regulated in aggressive fibromatosis, as well as in breast and colon cancers. Up-regulated in fibroblasts from patients with normophosphatemic tumoral calcinosis (NFTC).

The protein resides in the cytoplasm. Double-stranded nucleic acid binding that acts as an antiviral factor by playing an essential role in the formation of cytoplasmic antiviral granules. May play a role in the inflammatory response to tissue injury and the control of extra-osseous calcification, acting as a downstream target of TNF-alpha signaling. Involved in the regulation of EGR1, in coordination with RGL2. May be involved in endosome fusion. This Homo sapiens (Human) protein is Sterile alpha motif domain-containing protein 9 (SAMD9).